The chain runs to 58 residues: Ferredoxin-2 (58 aa).

4Fe-4S ferredoxin-type domains follow at residues 2–27 (IEVNDDCMACEACVEICPDVFEMNEE) and 30–58 (KAVVINPDSDLDCVEEAIDSCPAEAIVRS). Cys-8 serves as a coordination point for [3Fe-4S] cluster. Cys-11 is modified (cysteine methyl disulfide). Cys-14 serves as a coordination point for [3Fe-4S] cluster. Cysteines 18 and 42 form a disulfide. Cys-50 provides a ligand contact to [3Fe-4S] cluster.

In terms of assembly, homodimer (ferredoxin I) or homotetramer (ferredoxin II). Requires [3Fe-4S] cluster as cofactor. It depends on [4Fe-4S] cluster as a cofactor.

Functionally, ferredoxins are iron-sulfur proteins that transfer electrons in a wide variety of metabolic reactions. This is Ferredoxin-2 from Megalodesulfovibrio gigas (Desulfovibrio gigas).